The chain runs to 179 residues: Small ribosomal subunit protein uS5c (179 aa).

One can recognise an S5 DRBM domain in the interval 26 to 89 (FVERLIKISR…TDGRKNLIDV (64 aa)).

Belongs to the universal ribosomal protein uS5 family. In terms of assembly, part of the 30S ribosomal subunit. Contacts protein S4.

Its subcellular location is the plastid. It is found in the chloroplast. In terms of biological role, with S4 and S12 plays an important role in translational accuracy. This chain is Small ribosomal subunit protein uS5c (rps5), found in Thalassiosira pseudonana (Marine diatom).